A 275-amino-acid chain; its full sequence is Bis(5'-nucleosyl)-tetraphosphatase, symmetrical (275 aa).

It belongs to the Ap4A hydrolase family.

The enzyme catalyses P(1),P(4)-bis(5'-adenosyl) tetraphosphate + H2O = 2 ADP + 2 H(+). Its function is as follows. Hydrolyzes diadenosine 5',5'''-P1,P4-tetraphosphate to yield ADP. This is Bis(5'-nucleosyl)-tetraphosphatase, symmetrical from Photorhabdus laumondii subsp. laumondii (strain DSM 15139 / CIP 105565 / TT01) (Photorhabdus luminescens subsp. laumondii).